A 456-amino-acid chain; its full sequence is tRNA modification GTPase MnmE (456 aa).

Positions 24, 81, and 120 each coordinate (6S)-5-formyl-5,6,7,8-tetrahydrofolate. The TrmE-type G domain maps to 216 to 379 (GMTVVIAGRP…LRDHLKACMG (164 aa)). Residue Asn226 participates in K(+) binding. Residues 226–231 (NAGKSS), 245–251 (TDIAGTT), 270–273 (DTAG), and 335–338 (NKAD) contribute to the GTP site. Ser230 provides a ligand contact to Mg(2+). Residues Thr245, Ile247, and Thr250 each contribute to the K(+) site. Thr251 lines the Mg(2+) pocket. (6S)-5-formyl-5,6,7,8-tetrahydrofolate is bound at residue Lys456.

The protein belongs to the TRAFAC class TrmE-Era-EngA-EngB-Septin-like GTPase superfamily. TrmE GTPase family. In terms of assembly, homodimer. Heterotetramer of two MnmE and two MnmG subunits. It depends on K(+) as a cofactor.

It is found in the cytoplasm. Functionally, exhibits a very high intrinsic GTPase hydrolysis rate. Involved in the addition of a carboxymethylaminomethyl (cmnm) group at the wobble position (U34) of certain tRNAs, forming tRNA-cmnm(5)s(2)U34. This is tRNA modification GTPase MnmE from Pseudomonas fluorescens (strain ATCC BAA-477 / NRRL B-23932 / Pf-5).